The primary structure comprises 194 residues: Large ribosomal subunit protein bL27c (194 aa).

Residues 1 to 57 constitute a chloroplast transit peptide; the sequence is MAVTTSMSFNLMASFRGMSLSSSSSSSFFKGEFGPSSLRLPNKSPLSVSPFPLTIES. The interval 57-76 is disordered; it reads SAHKKGAGSTKNGRDSKGQR.

Component of the chloroplast large ribosomal subunit (LSU). Mature 70S chloroplast ribosomes of higher plants consist of a small (30S) and a large (50S) subunit. The 30S small subunit contains 1 molecule of ribosomal RNA (16S rRNA) and 24 different proteins. The 50S large subunit contains 3 rRNA molecules (23S, 5S and 4.5S rRNA) and 33 different proteins.

Its subcellular location is the plastid. It is found in the chloroplast. Its function is as follows. Component of the chloroplast ribosome (chloro-ribosome), a dedicated translation machinery responsible for the synthesis of chloroplast genome-encoded proteins, including proteins of the transcription and translation machinery and components of the photosynthetic apparatus. This is Large ribosomal subunit protein bL27c (RPL27) from Spinacia oleracea (Spinach).